The chain runs to 76 residues: Large ribosomal subunit protein eL20 (76 aa).

It belongs to the eukaryotic ribosomal protein eL20 family. As to quaternary structure, part of the 50S ribosomal subunit. Binds 23S rRNA.

The sequence is that of Large ribosomal subunit protein eL20 from Methanocaldococcus jannaschii (strain ATCC 43067 / DSM 2661 / JAL-1 / JCM 10045 / NBRC 100440) (Methanococcus jannaschii).